A 212-amino-acid polypeptide reads, in one-letter code: 3-isopropylmalate dehydratase small subunit (212 aa).

The protein belongs to the LeuD family. LeuD type 1 subfamily. As to quaternary structure, heterodimer of LeuC and LeuD.

The catalysed reaction is (2R,3S)-3-isopropylmalate = (2S)-2-isopropylmalate. It participates in amino-acid biosynthesis; L-leucine biosynthesis; L-leucine from 3-methyl-2-oxobutanoate: step 2/4. Its function is as follows. Catalyzes the isomerization between 2-isopropylmalate and 3-isopropylmalate, via the formation of 2-isopropylmaleate. This chain is 3-isopropylmalate dehydratase small subunit, found in Methylococcus capsulatus (strain ATCC 33009 / NCIMB 11132 / Bath).